Reading from the N-terminus, the 329-residue chain is Mitochondrial substrate carrier family protein Q (329 aa).

Solcar repeat units follow at residues 18–115, 125–206, and 216–310; these read VEAL…LKSI, LGTI…LRAL, and LGGL…VVIH. 6 consecutive transmembrane segments (helical) span residues 21 to 41, 95 to 115, 131 to 151, 175 to 195, 221 to 241, and 298 to 318; these read LGHA…TYPF, LIGI…LKSI, LAIA…IWVV, GFGG…NPSV, VFIL…PYLL, and AFMF…LFYL.

It belongs to the mitochondrial carrier (TC 2.A.29) family.

The protein localises to the peroxisome membrane. May have transport activity. This is Mitochondrial substrate carrier family protein Q (mcfQ) from Dictyostelium discoideum (Social amoeba).